The sequence spans 227 residues: Cytochrome c oxidase subunit 2 (227 aa).

Residues 1-14 (MAYPLQLGLQDATS) lie on the Mitochondrial intermembrane side of the membrane. Residues 15–45 (PIMEELMNFHDHTLMIVFLISSLVLYVISSM) traverse the membrane as a helical segment. Over 46–59 (LTTKLTHTSTMDAQ) the chain is Mitochondrial matrix. Residues 60–87 (EVETIWTILPAVILIMIALPSLRILYMM) traverse the membrane as a helical segment. Residues 88–227 (DEINNPVLTV…NFETWSVSMI (140 aa)) lie on the Mitochondrial intermembrane side of the membrane. 6 residues coordinate Cu cation: His-161, Cys-196, Glu-198, Cys-200, His-204, and Met-207. Glu-198 lines the Mg(2+) pocket.

This sequence belongs to the cytochrome c oxidase subunit 2 family. As to quaternary structure, component of the cytochrome c oxidase (complex IV, CIV), a multisubunit enzyme composed of 14 subunits. The complex is composed of a catalytic core of 3 subunits MT-CO1, MT-CO2 and MT-CO3, encoded in the mitochondrial DNA, and 11 supernumerary subunits COX4I, COX5A, COX5B, COX6A, COX6B, COX6C, COX7A, COX7B, COX7C, COX8 and NDUFA4, which are encoded in the nuclear genome. The complex exists as a monomer or a dimer and forms supercomplexes (SCs) in the inner mitochondrial membrane with NADH-ubiquinone oxidoreductase (complex I, CI) and ubiquinol-cytochrome c oxidoreductase (cytochrome b-c1 complex, complex III, CIII), resulting in different assemblies (supercomplex SCI(1)III(2)IV(1) and megacomplex MCI(2)III(2)IV(2)). Found in a complex with TMEM177, COA6, COX18, COX20, SCO1 and SCO2. Interacts with TMEM177 in a COX20-dependent manner. Interacts with COX20. Interacts with COX16. Cu cation serves as cofactor.

It is found in the mitochondrion inner membrane. The catalysed reaction is 4 Fe(II)-[cytochrome c] + O2 + 8 H(+)(in) = 4 Fe(III)-[cytochrome c] + 2 H2O + 4 H(+)(out). Functionally, component of the cytochrome c oxidase, the last enzyme in the mitochondrial electron transport chain which drives oxidative phosphorylation. The respiratory chain contains 3 multisubunit complexes succinate dehydrogenase (complex II, CII), ubiquinol-cytochrome c oxidoreductase (cytochrome b-c1 complex, complex III, CIII) and cytochrome c oxidase (complex IV, CIV), that cooperate to transfer electrons derived from NADH and succinate to molecular oxygen, creating an electrochemical gradient over the inner membrane that drives transmembrane transport and the ATP synthase. Cytochrome c oxidase is the component of the respiratory chain that catalyzes the reduction of oxygen to water. Electrons originating from reduced cytochrome c in the intermembrane space (IMS) are transferred via the dinuclear copper A center (CU(A)) of subunit 2 and heme A of subunit 1 to the active site in subunit 1, a binuclear center (BNC) formed by heme A3 and copper B (CU(B)). The BNC reduces molecular oxygen to 2 water molecules using 4 electrons from cytochrome c in the IMS and 4 protons from the mitochondrial matrix. The protein is Cytochrome c oxidase subunit 2 (MT-CO2) of Malacothrix typica (Long-eared mouse).